The following is a 186-amino-acid chain: dCTP deaminase (186 aa).

107 to 112 (KSSYAR) lines the dCTP pocket. The Proton donor/acceptor role is filled by Glu-133. Residues Gln-152, Tyr-166, and Gln-176 each contribute to the dCTP site.

It belongs to the dCTP deaminase family. In terms of assembly, homotrimer.

It catalyses the reaction dCTP + H2O + H(+) = dUTP + NH4(+). Its pathway is pyrimidine metabolism; dUMP biosynthesis; dUMP from dCTP (dUTP route): step 1/2. Its function is as follows. Catalyzes the deamination of dCTP to dUTP. In Chloroflexus aggregans (strain MD-66 / DSM 9485), this protein is dCTP deaminase.